A 196-amino-acid polypeptide reads, in one-letter code: uncharacterized protein (196 aa).

A signal peptide spans 1-21 (MNGKQCFCFFLFHLFYTGLFA). Cys22 is lipidated: N-palmitoyl cysteine. The S-diacylglycerol cysteine moiety is linked to residue Cys22.

It is found in the cell membrane. This is an uncharacterized protein from Treponema pallidum (strain Nichols).